Here is a 241-residue protein sequence, read N- to C-terminus: Lipopolysaccharide export system ATP-binding protein LptB (241 aa).

The ABC transporter domain occupies 5 to 237 (LQAQSLFKSY…PMVRQVYLGD (233 aa)). An ATP-binding site is contributed by 37–44 (GPNGAGKT).

This sequence belongs to the ABC transporter superfamily. Outer membrane lipopolysaccharide export (TC 1.B.42) family. In terms of assembly, component of the lipopolysaccharide transport and assembly complex. The LptBFG transporter is composed of two ATP-binding proteins (LptB) and two transmembrane proteins (LptF and LptG).

It localises to the cytoplasm. It is found in the cell inner membrane. In terms of biological role, part of the ABC transporter complex LptBFG involved in the translocation of lipopolysaccharide (LPS) from the inner membrane to the outer membrane. Probably responsible for energy coupling to the transport system. The sequence is that of Lipopolysaccharide export system ATP-binding protein LptB (lptB) from Acidithiobacillus ferridurans.